The chain runs to 456 residues: PTS system sucrose-specific EIIBC component (456 aa).

A PTS EIIB type-1 domain is found at 4 to 87; it reads EQISRSLLPL…IQAAGISESS (84 aa). The active-site Phosphocysteine intermediate; for EIIB activity is the Cys26. A PTS EIIC type-1 domain is found at 107-456; that stretch reads RLLSNIFVPI…LTLKYKTDAE (350 aa). Transmembrane regions (helical) follow at residues 112–132, 144–164, 181–201, 209–229, 247–267, 288–308, 329–349, 360–380, 388–408, and 428–448; these read IFVPIIPAIVASGLLMGLLGM, ALYIMLDMCSSAAFIILPILI, TLGGILTHPALTNAWGVAAGF, IEVAMIGYQGTVFPVLLAVWF, LILTPFLTVIISGFIALLLIG, AGWLAGLLFGGLYSVIVITGI, FLLPIWAMANVAQGGACFAVW, ITLPSAFSAMLGITEAAIFGI, FIAALVGGAAGGAWVVSMHVY, and LLNYIIGMAIAFAVAFALSLT.

The protein localises to the cell inner membrane. It carries out the reaction N(pros)-phospho-L-histidyl-[protein](out) + sucrose = sucrose 6(G)-phosphate(in) + L-histidyl-[protein]. Its function is as follows. The phosphoenolpyruvate-dependent sugar phosphotransferase system (sugar PTS), a major carbohydrate active transport system, catalyzes the phosphorylation of incoming sugar substrates concomitantly with their translocation across the cell membrane. This system is involved in sucrose transport. The polypeptide is PTS system sucrose-specific EIIBC component (Klebsiella pneumoniae).